Consider the following 319-residue polypeptide: Acetyl esterase (319 aa).

The Involved in the stabilization of the negatively charged intermediate by the formation of the oxyanion hole signature appears at 91-93 (HGG). Catalysis depends on residues Ser165, Asp262, and His292.

The protein belongs to the 'GDXG' lipolytic enzyme family. Homodimer. Interacts with MalT and MelA.

The protein resides in the cytoplasm. Its function is as follows. Displays esterase activity towards short chain fatty esters (acyl chain length of up to 8 carbons). Able to hydrolyze triacetylglycerol (triacetin) and tributyrylglycerol (tributyrin), but not trioleylglycerol (triolein) or cholesterol oleate. Negatively regulates MalT activity by antagonizing maltotriose binding. Inhibits MelA galactosidase activity. This chain is Acetyl esterase, found in Escherichia coli O139:H28 (strain E24377A / ETEC).